Here is a 179-residue protein sequence, read N- to C-terminus: Peptide deformylase 2 (179 aa).

Cys-101 and His-143 together coordinate Fe cation. Glu-144 is an active-site residue. His-147 is a binding site for Fe cation.

This sequence belongs to the polypeptide deformylase family. Requires Fe(2+) as cofactor.

It carries out the reaction N-terminal N-formyl-L-methionyl-[peptide] + H2O = N-terminal L-methionyl-[peptide] + formate. Functionally, removes the formyl group from the N-terminal Met of newly synthesized proteins. Requires at least a dipeptide for an efficient rate of reaction. N-terminal L-methionine is a prerequisite for activity but the enzyme has broad specificity at other positions. The protein is Peptide deformylase 2 of Pseudomonas syringae pv. tomato (strain ATCC BAA-871 / DC3000).